We begin with the raw amino-acid sequence, 484 residues long: Protein nucleotidyltransferase YdiU (484 aa).

8 residues coordinate ATP: G87, G89, R90, K110, D122, G123, R173, and R180. D249 acts as the Proton acceptor in catalysis. Residues N250 and D259 each contribute to the Mg(2+) site. D259 serves as a coordination point for ATP.

Belongs to the SELO family. It depends on Mg(2+) as a cofactor. Requires Mn(2+) as cofactor.

The enzyme catalyses L-seryl-[protein] + ATP = 3-O-(5'-adenylyl)-L-seryl-[protein] + diphosphate. It catalyses the reaction L-threonyl-[protein] + ATP = 3-O-(5'-adenylyl)-L-threonyl-[protein] + diphosphate. The catalysed reaction is L-tyrosyl-[protein] + ATP = O-(5'-adenylyl)-L-tyrosyl-[protein] + diphosphate. It carries out the reaction L-histidyl-[protein] + UTP = N(tele)-(5'-uridylyl)-L-histidyl-[protein] + diphosphate. The enzyme catalyses L-seryl-[protein] + UTP = O-(5'-uridylyl)-L-seryl-[protein] + diphosphate. It catalyses the reaction L-tyrosyl-[protein] + UTP = O-(5'-uridylyl)-L-tyrosyl-[protein] + diphosphate. In terms of biological role, nucleotidyltransferase involved in the post-translational modification of proteins. It can catalyze the addition of adenosine monophosphate (AMP) or uridine monophosphate (UMP) to a protein, resulting in modifications known as AMPylation and UMPylation. This Lachnoclostridium phytofermentans (strain ATCC 700394 / DSM 18823 / ISDg) (Clostridium phytofermentans) protein is Protein nucleotidyltransferase YdiU.